Consider the following 349-residue polypeptide: Protein RecA (349 aa).

71–75 (SSGKT) is a binding site for phosphate. ATP-binding positions include 71–76 (SSGKTT) and 102–105 (DPEY). Gln-196 is a phosphate binding site.

The protein belongs to the RecA family. Polymerizes non-specifically on ssDNA to form filaments. Interacts with and activates LexA leading to autocatalytic cleavage of LexA, which derepresses the SOS regulon and activates DNA repair.

It localises to the cytoplasm. Required for homologous recombination (HR) and the bypass of mutagenic DNA lesions (double strand breaks, DSB) by the SOS response. Can catalyze the hydrolysis of ATP in the presence of single-stranded DNA, the ATP-dependent uptake of single-stranded DNA by duplex DNA, and the ATP-dependent hybridization of homologous single-stranded DNAs. Numerous X-ray crystals have been resolved under different conditions which indicate the flexibility of the protein, essential to its function. Gln-196 contributes to this plasticity by acting as a switch residue, which transmits the effect of nucleotide binding to the DNA-binding region. This Mycolicibacterium smegmatis (strain ATCC 700084 / mc(2)155) (Mycobacterium smegmatis) protein is Protein RecA.